Here is a 412-residue protein sequence, read N- to C-terminus: Glucose-1-phosphate adenylyltransferase (412 aa).

Residues tyrosine 98, glycine 163, 178 to 179, and serine 189 each bind alpha-D-glucose 1-phosphate; that span reads EK.

It belongs to the bacterial/plant glucose-1-phosphate adenylyltransferase family. Homotetramer.

The catalysed reaction is alpha-D-glucose 1-phosphate + ATP + H(+) = ADP-alpha-D-glucose + diphosphate. It functions in the pathway glycan biosynthesis; glycogen biosynthesis. Involved in the biosynthesis of ADP-glucose, a building block required for the elongation reactions to produce glycogen. Catalyzes the reaction between ATP and alpha-D-glucose 1-phosphate (G1P) to produce pyrophosphate and ADP-Glc. This is Glucose-1-phosphate adenylyltransferase from Thermosipho africanus (strain TCF52B).